The primary structure comprises 134 residues: Large-conductance mechanosensitive channel (134 aa).

2 helical membrane-spanning segments follow: residues Val-16–Leu-36 and Ile-84–Ile-104.

Belongs to the MscL family. In terms of assembly, homopentamer.

It localises to the cell inner membrane. In terms of biological role, channel that opens in response to stretch forces in the membrane lipid bilayer. May participate in the regulation of osmotic pressure changes within the cell. In Stenotrophomonas maltophilia (strain R551-3), this protein is Large-conductance mechanosensitive channel.